The sequence spans 286 residues: Shikimate dehydrogenase (NADP(+)) (286 aa).

Shikimate contacts are provided by residues 22–24 (SRS) and T71. K75 serves as the catalytic Proton acceptor. E87 contributes to the NADP(+) binding site. Shikimate contacts are provided by N96 and D111. NADP(+) is bound by residues 136 to 140 (GAGGA), 160 to 165 (NRTPER), and I225. Y227 contributes to the shikimate binding site. G248 contacts NADP(+).

Belongs to the shikimate dehydrogenase family. Homodimer.

It catalyses the reaction shikimate + NADP(+) = 3-dehydroshikimate + NADPH + H(+). It participates in metabolic intermediate biosynthesis; chorismate biosynthesis; chorismate from D-erythrose 4-phosphate and phosphoenolpyruvate: step 4/7. Involved in the biosynthesis of the chorismate, which leads to the biosynthesis of aromatic amino acids. Catalyzes the reversible NADPH linked reduction of 3-dehydroshikimate (DHSA) to yield shikimate (SA). The sequence is that of Shikimate dehydrogenase (NADP(+)) from Rhizobium meliloti (strain 1021) (Ensifer meliloti).